The primary structure comprises 330 residues: Inositol 2-dehydrogenase (330 aa).

Belongs to the Gfo/Idh/MocA family.

It catalyses the reaction myo-inositol + NAD(+) = scyllo-inosose + NADH + H(+). Its pathway is polyol metabolism; myo-inositol degradation into acetyl-CoA; acetyl-CoA from myo-inositol: step 1/7. Its function is as follows. Involved in the oxidation of myo-inositol (MI) to 2-keto-myo-inositol (2KMI or 2-inosose). The protein is Inositol 2-dehydrogenase (idhA) of Rhizobium meliloti (strain 1021) (Ensifer meliloti).